Consider the following 479-residue polypeptide: Ribulose bisphosphate carboxylase large chain 2 (479 aa).

Substrate-binding residues include asparagine 116 and threonine 166. Lysine 168 (proton acceptor) is an active-site residue. Position 170 (lysine 170) interacts with substrate. Residues lysine 194, aspartate 196, and glutamate 197 each coordinate Mg(2+). At lysine 194 the chain carries N6-carboxylysine. Residue histidine 287 is the Proton acceptor of the active site. Arginine 288, histidine 320, and serine 372 together coordinate substrate.

The protein belongs to the RuBisCO large chain family. Type I subfamily. As to quaternary structure, heterohexadecamer of 8 large chains and 8 small chains. Mg(2+) is required as a cofactor.

It carries out the reaction 2 (2R)-3-phosphoglycerate + 2 H(+) = D-ribulose 1,5-bisphosphate + CO2 + H2O. It catalyses the reaction D-ribulose 1,5-bisphosphate + O2 = 2-phosphoglycolate + (2R)-3-phosphoglycerate + 2 H(+). In terms of biological role, ruBisCO catalyzes two reactions: the carboxylation of D-ribulose 1,5-bisphosphate, the primary event in carbon dioxide fixation, as well as the oxidative fragmentation of the pentose substrate. Both reactions occur simultaneously and in competition at the same active site. This Bradyrhizobium sp. (strain ORS 278) protein is Ribulose bisphosphate carboxylase large chain 2.